Consider the following 378-residue polypeptide: Acetylornithine deacetylase (378 aa).

Zn(2+) is bound at residue H76. Residue D78 is part of the active site. D108 lines the Zn(2+) pocket. E140 is a catalytic residue. Zn(2+)-binding residues include E141, E165, and H351.

It belongs to the peptidase M20A family. ArgE subfamily. As to quaternary structure, homodimer. Zn(2+) is required as a cofactor. It depends on Co(2+) as a cofactor. The cofactor is glutathione.

The protein resides in the cytoplasm. The enzyme catalyses N(2)-acetyl-L-ornithine + H2O = L-ornithine + acetate. The protein operates within amino-acid biosynthesis; L-arginine biosynthesis; L-ornithine from N(2)-acetyl-L-ornithine (linear): step 1/1. Its function is as follows. Catalyzes the hydrolysis of the amide bond of N(2)-acetylated L-amino acids. Cleaves the acetyl group from N-acetyl-L-ornithine to form L-ornithine, an intermediate in L-arginine biosynthesis pathway, and a branchpoint in the synthesis of polyamines. This chain is Acetylornithine deacetylase, found in Aliivibrio fischeri (strain ATCC 700601 / ES114) (Vibrio fischeri).